A 432-amino-acid polypeptide reads, in one-letter code: Neuronal pentraxin-1 (432 aa).

The signal sequence occupies residues methionine 1–alanine 22. Residues glutamate 90–glutamate 128 are disordered. 2 N-linked (GlcNAc...) asparagine glycosylation sites follow: asparagine 154 and asparagine 193. One can recognise a Pentraxin (PTX) domain in the interval aspartate 226 to cysteine 428. The cysteines at positions 256 and 316 are disulfide-linked. Positions 280, 358, 359, 360, and 370 each coordinate Ca(2+).

In terms of assembly, homooligomer or heterooligomer (probably pentamer) with neuronal pentraxin receptor (NPTXR). It depends on Ca(2+) as a cofactor. In terms of processing, glycosylated. As to expression, cerebellum, hippocampus and cerebral cortex.

The protein localises to the secreted. It localises to the cytoplasmic vesicle. The protein resides in the secretory vesicle. Its subcellular location is the endoplasmic reticulum. In terms of biological role, may be involved in mediating uptake of synaptic material during synapse remodeling or in mediating the synaptic clustering of AMPA glutamate receptors at a subset of excitatory synapses. This is Neuronal pentraxin-1 (Nptx1) from Rattus norvegicus (Rat).